The primary structure comprises 550 residues: Carboxypeptidase Y homolog A (550 aa).

Residues 1–18 form the signal peptide; it reads MKSLVLGLLVGSAIASGP. The propeptide occupies 19–131; sequence LQHVLHAPPE…KLAQYDLRIR (113 aa). 5 disulfide bridges follow: Cys185-Cys424, Cys319-Cys333, Cys343-Cys366, Cys350-Cys359, and Cys388-Cys394. Residue Asn216 is glycosylated (N-linked (GlcNAc...) asparagine). Ser272 is a catalytic residue. Asp463 is a catalytic residue. Residues Asn493 and Asn514 are each glycosylated (N-linked (GlcNAc...) asparagine). His525 is an active-site residue.

The protein belongs to the peptidase S10 family.

It localises to the vacuole. It carries out the reaction Release of a C-terminal amino acid with broad specificity.. Vacuolar carboxypeptidase involved in degradation of small peptides. Digests preferentially peptides containing an aliphatic or hydrophobic residue in P1' position, as well as methionine, leucine or phenylalanine in P1 position of ester substrate. The protein is Carboxypeptidase Y homolog A (CPYA) of Paracoccidioides lutzii (strain ATCC MYA-826 / Pb01) (Paracoccidioides brasiliensis).